A 213-amino-acid chain; its full sequence is Glycerol-3-phosphate acyltransferase (213 aa).

6 helical membrane passes run 3-23, 55-75, 80-100, 110-130, 142-162, and 163-183; these read ILLL…LWIG, ITFL…IWLG, SPLI…FTGF, AGVL…VFAL, SITA…IHFL, and LDGY…VIIF.

It belongs to the PlsY family. In terms of assembly, probably interacts with PlsX.

It localises to the cell membrane. The catalysed reaction is an acyl phosphate + sn-glycerol 3-phosphate = a 1-acyl-sn-glycero-3-phosphate + phosphate. It functions in the pathway lipid metabolism; phospholipid metabolism. Catalyzes the transfer of an acyl group from acyl-phosphate (acyl-PO(4)) to glycerol-3-phosphate (G3P) to form lysophosphatidic acid (LPA). This enzyme utilizes acyl-phosphate as fatty acyl donor, but not acyl-CoA or acyl-ACP. In Streptococcus thermophilus (strain CNRZ 1066), this protein is Glycerol-3-phosphate acyltransferase.